The following is a 490-amino-acid chain: Betaine aldehyde dehydrogenase (490 aa).

2 residues coordinate K(+): Ile-27 and Asp-93. Residue 150-152 (GAW) participates in NAD(+) binding. Residue Lys-162 is the Charge relay system of the active site. Position 176 to 179 (176 to 179 (KPSE)) interacts with NAD(+). Val-180 is a K(+) binding site. 230–233 (GTDT) serves as a coordination point for NAD(+). K(+) is bound at residue Leu-246. Residue Glu-252 is the Proton acceptor of the active site. NAD(+)-binding residues include Gly-254, Cys-286, and Glu-387. Residue Cys-286 is the Nucleophile of the active site. Cysteine sulfenic acid (-SOH) is present on Cys-286. 2 residues coordinate K(+): Lys-457 and Gly-460. Glu-464 serves as the catalytic Charge relay system.

This sequence belongs to the aldehyde dehydrogenase family. As to quaternary structure, dimer of dimers. K(+) is required as a cofactor.

It carries out the reaction betaine aldehyde + NAD(+) + H2O = glycine betaine + NADH + 2 H(+). It participates in amine and polyamine biosynthesis; betaine biosynthesis via choline pathway; betaine from betaine aldehyde: step 1/1. Involved in the biosynthesis of the osmoprotectant glycine betaine. Catalyzes the irreversible oxidation of betaine aldehyde to the corresponding acid. The polypeptide is Betaine aldehyde dehydrogenase (Pseudomonas fluorescens (strain ATCC BAA-477 / NRRL B-23932 / Pf-5)).